We begin with the raw amino-acid sequence, 1225 residues long: MVDVNRFKSMQITLASPSKVRSWSYGEVKKPETINYRTLKPEREGLFDEVIFGPTKDWECACGKYKRIRYRGIVCDRCGVEVTRTKVRRERMGHIELKAPVSHIWYFKGIPSRMGLTLDMSPRALEEVIYFAAYVVIDPKDTPLEHKSIMTEREYRERLREYGYGSFVAKMGAEAIQDLLKQVDLEKEIAELKEELKTATGQKRVKAIRRLDVLDAFYKSGNKPEWMILNILPVIPPDLRPMLQLDGGRFASSDLNDLYRRVINRNNRLARLLELNAPGIIVQNEKRMLQEAVDALIDNGRRGRPITGPGSRPLKSLSHMLKGKQGRFRQNLLGKRVDFSGRSVIAVGPTLKMYQCGVPREMAIELFKPFVMREIVARDIVQNVKAAKRLVERGDERIWDILEEVIKEHPVLLNRAPTLHRLGIQAFEPVLIDGKALRLHPLVCEAYNADFDGDQMAIHVPLSEEAQAEARILMLAAEHILNPKDGKPVVTPSQDMVLGNYYLTMEEAGREGEGMVFKDRDEAVMAYRNGYVHLHSRVGIATDSLNKPWTEEQRHKVLLTTVGKILFNDIMPEGLPYLQEPNNANLTEGVPAKYFLPLGGAIKEAISNLELNPPFKKKNLGNIIAEIFKRFRTTETSALLDRMKNLGYHHSTLAGLTVGIADIPVVDDKAEIIEESHKRVEQITKQFRRGMITDDERYNAVTAEWRAAREKLEKRLIANQDPKNPIVMMMDSGARGNISNFSQLAGMRGLMAAPNGRIMELPILSNFREGLSVLEMFFSTHGARKGMTDTALKTADSGYLTRRLVDVAQDVIIREDDCGTDRGLLIRSIAEGKEMIESLEERLNGRYTKKTVKHPETGAVIIGPNELITEDKAREIVNAGVEEVTIRSVFTCNTRRGVCRHCYGINLATGDAVEVGEAVGTIAAQSIGEPGTQLTMRTFHTGGVASNTDITQGLPRVQEIFEARNPKGEAVITEVKGQVTAIEEDASTRTKKVFVKGETGEGEYVVPFTARMRVEVGGQVARGAALTEGSIQPKRLLAVRDVLSVETYLLGEVQKVYRSQGVEIGDKHIEVMVRQMIRKVRVMDPGDTDLLMGTLMDINDFTDANKDVLIAGGVPATGRPVLMGITKASLETNSFLSAASFQETTRVLTDAAIRGKKDHLLGLKENVIIGKIIPAGTGMARYRNLEPHAVNEEEYLNPPVEEEGNEETTEVVVDTAVETVEETVE.

C60, C62, C75, and C78 together coordinate Zn(2+). Mg(2+) contacts are provided by D450, D452, and D454. Residues C818, C892, C899, and C902 each coordinate Zn(2+).

Belongs to the RNA polymerase beta' chain family. As to quaternary structure, the RNAP catalytic core consists of 2 alpha, 1 beta, 1 beta' and 1 omega subunit. When a sigma factor is associated with the core the holoenzyme is formed, which can initiate transcription. The cofactor is Mg(2+). Zn(2+) serves as cofactor.

The catalysed reaction is RNA(n) + a ribonucleoside 5'-triphosphate = RNA(n+1) + diphosphate. Functionally, DNA-dependent RNA polymerase catalyzes the transcription of DNA into RNA using the four ribonucleoside triphosphates as substrates. This is DNA-directed RNA polymerase subunit beta' from Streptococcus pneumoniae (strain ATCC BAA-255 / R6).